Consider the following 190-residue polypeptide: Iron-sulfur protein (190 aa).

In terms of domain architecture, 4Fe-4S ferredoxin-type 1 spans 8–36; sequence VIIYANPDHCLSCHSCELACAVAHSGGHD. Residues Cys17, Cys20, Cys23, Cys27, Cys65, Cys68, Cys73, Cys77, Cys96, Cys99, Cys102, Cys106, Cys133, Cys136, Cys150, and Cys154 each contribute to the [4Fe-4S] cluster site. 4Fe-4S ferredoxin-type domains are found at residues 87-116 and 133-164; these read GQVQ…VRSE and CDLC…MVDL.

In terms of biological role, the carbon monoxide dehydrogenase (CODH) oxidizes carbon monoxide coupled, via CooF, to the reduction of a hydrogen cation by a hydrogenase (probably CooH). CooF is required in stoichiometric amounts in vitro for anchoring CODH to the membrane as well as for conveying the electrons to the hydrogenase. In Rhodospirillum rubrum, this protein is Iron-sulfur protein (cooF).